Reading from the N-terminus, the 267-residue chain is Undecaprenyl-diphosphatase (267 aa).

7 helical membrane-spanning segments follow: residues proline 39–phenylalanine 59, valine 87–leucine 107, phenylalanine 112–valine 132, valine 145–valine 165, proline 183–valine 203, leucine 216–leucine 236, and serine 244–alanine 264.

The protein belongs to the UppP family.

Its subcellular location is the cell inner membrane. The catalysed reaction is di-trans,octa-cis-undecaprenyl diphosphate + H2O = di-trans,octa-cis-undecaprenyl phosphate + phosphate + H(+). Catalyzes the dephosphorylation of undecaprenyl diphosphate (UPP). Confers resistance to bacitracin. This is Undecaprenyl-diphosphatase from Gemmatimonas aurantiaca (strain DSM 14586 / JCM 11422 / NBRC 100505 / T-27).